Here is a 226-residue protein sequence, read N- to C-terminus: PKHD-type hydroxylase Pfl01_0799 (226 aa).

Positions 78-178 constitute a Fe2OG dioxygenase domain; sequence KVFPPLLNCY…RYASFFWTQS (101 aa). 3 residues coordinate Fe cation: H96, D98, and H159. Residue R169 participates in 2-oxoglutarate binding.

It depends on Fe(2+) as a cofactor. Requires L-ascorbate as cofactor.

This is PKHD-type hydroxylase Pfl01_0799 from Pseudomonas fluorescens (strain Pf0-1).